Reading from the N-terminus, the 615-residue chain is NEDD8 ultimate buster 1 (615 aa).

Coiled-coil stretches lie at residues 36–70 (LALK…AIER) and 152–203 (KAMV…AAET). UBA domains lie at 374-413 (YIDP…HITN), 424-470 (EEKE…LLSN), and 489-529 (SPSQ…LAHN). The Nuclear localization signal signature appears at 414–431 (RREELAQIRKEEKEKKRR). Positions 427 to 474 (EKKRRRLENIRFLKGMGYSTHAAQQVLHAASGNLDEALKILLSNPQMW) are NEDD8-binding 1. The interval 532–586 (SLPPELPLSPEDSLSPPATSPSDSAGTSSASTDEDMETEAVNEILEDIPEHEEDY) is disordered. Residues 539-562 (LSPEDSLSPPATSPSDSAGTSSAS) show a composition bias toward low complexity. Positions 550–598 (TSPSDSAGTSSASTDEDMETEAVNEILEDIPEHEEDYLDSTLEDEEIII) are NEDD8-binding 2. Over residues 563 to 586 (TDEDMETEAVNEILEDIPEHEEDY) the composition is skewed to acidic residues.

In terms of assembly, directly interacts with NEDD8 and PSMD4/S5a, a member of the regulatory subunit of the 26S proteasome. Isoform 1 binds to NEDD8 more efficiently than isoform 2. Interacts with AIPL1. The interaction with UBD via UBA domains facilitates the linking of UBD-conjugated target protein to the proteasome complex and accelerates UBD degradation and that of its conjugates. As to expression, widely expressed with lowest expression in the pancreas for isoform 1 and in leukocytes, liver, prostate and skeletal muscle for isoform 2.

The protein resides in the nucleus. In terms of biological role, specific down-regulator of the NEDD8 conjugation system. Recruits NEDD8, UBD, and their conjugates to the proteasome for degradation. Isoform 1 promotes the degradation of NEDD8 more efficiently than isoform 2. In Homo sapiens (Human), this protein is NEDD8 ultimate buster 1 (NUB1).